Here is a 507-residue protein sequence, read N- to C-terminus: Sulfatase (507 aa).

A signal peptide spans 1–18 (MKTRYFLLLGICMLSCRT). The Ca(2+) site is built by aspartate 39, aspartate 40, and cysteine 79. Cysteine 79 serves as the catalytic Nucleophile. Cysteine 79 carries the post-translational modification 3-oxoalanine (Cys). The active site involves histidine 139. Aspartate 325 and histidine 326 together coordinate Ca(2+).

This sequence belongs to the sulfatase family. It depends on Ca(2+) as a cofactor. The conversion to 3-oxoalanine (also known as C-formylglycine, FGly), of a serine or cysteine residue in prokaryotes and of a cysteine residue in eukaryotes, is critical for catalytic activity. This post-translational modification is severely defective in multiple sulfatase deficiency (MSD).

Its subcellular location is the periplasm. Its function is as follows. Sulfatase that may be involved in ulvan degradation. Ulvan is the main polysaccharide component of the Ulvales (green seaweed) cell wall. It is composed of disaccharide building blocks comprising 3-sulfated rhamnose (Rha3S) linked to D-glucuronic acid (GlcA), L-iduronic acid (IduA), or D-xylose (Xyl). Has no activity on different ulvan polymers. The chain is Sulfatase from Formosa agariphila (strain DSM 15362 / KCTC 12365 / LMG 23005 / KMM 3901 / M-2Alg 35-1).